The primary structure comprises 58 residues: MGIKILEKCVGCGNCVVFCPRRAIKTYGVAIVDENKCSNCGICARYCPINAIKVDTSL.

4Fe-4S ferredoxin-type domains are found at residues 2–27 and 28–57; these read GIKI…IKTY and GVAI…VDTS. C9, C12, C15, C19, C37, C40, C43, and C47 together coordinate [4Fe-4S] cluster.

[4Fe-4S] cluster serves as cofactor.

In terms of biological role, ferredoxins are iron-sulfur proteins that transfer electrons probably in the CO-dehydrogenase complex. This is an uncharacterized protein from Methanocaldococcus jannaschii (strain ATCC 43067 / DSM 2661 / JAL-1 / JCM 10045 / NBRC 100440) (Methanococcus jannaschii).